Consider the following 105-residue polypeptide: Pyrimidine/purine nucleoside phosphorylase (105 aa).

This sequence belongs to the nucleoside phosphorylase PpnP family.

It catalyses the reaction a purine D-ribonucleoside + phosphate = a purine nucleobase + alpha-D-ribose 1-phosphate. The catalysed reaction is adenosine + phosphate = alpha-D-ribose 1-phosphate + adenine. It carries out the reaction cytidine + phosphate = cytosine + alpha-D-ribose 1-phosphate. The enzyme catalyses guanosine + phosphate = alpha-D-ribose 1-phosphate + guanine. It catalyses the reaction inosine + phosphate = alpha-D-ribose 1-phosphate + hypoxanthine. The catalysed reaction is thymidine + phosphate = 2-deoxy-alpha-D-ribose 1-phosphate + thymine. It carries out the reaction uridine + phosphate = alpha-D-ribose 1-phosphate + uracil. The enzyme catalyses xanthosine + phosphate = alpha-D-ribose 1-phosphate + xanthine. Catalyzes the phosphorolysis of diverse nucleosides, yielding D-ribose 1-phosphate and the respective free bases. Can use uridine, adenosine, guanosine, cytidine, thymidine, inosine and xanthosine as substrates. Also catalyzes the reverse reactions. This Wolinella succinogenes (strain ATCC 29543 / DSM 1740 / CCUG 13145 / JCM 31913 / LMG 7466 / NCTC 11488 / FDC 602W) (Vibrio succinogenes) protein is Pyrimidine/purine nucleoside phosphorylase.